We begin with the raw amino-acid sequence, 125 residues long: UPF0102 protein ABO_0585 (125 aa).

It belongs to the UPF0102 family.

In Alcanivorax borkumensis (strain ATCC 700651 / DSM 11573 / NCIMB 13689 / SK2), this protein is UPF0102 protein ABO_0585.